Consider the following 454-residue polypeptide: Bifunctional protein GlmU (454 aa).

Residues 1-228 (MNKCAIILAA…FEETLGVNSR (228 aa)) form a pyrophosphorylase region. Residues 8–11 (LAAG), K22, Q73, and 78–79 (GT) each bind UDP-N-acetyl-alpha-D-glucosamine. D103 serves as a coordination point for Mg(2+). UDP-N-acetyl-alpha-D-glucosamine contacts are provided by G140, E154, N169, and N226. N226 serves as a coordination point for Mg(2+). Residues 229-249 (AELAKVESIMRNRINRTHLDN) are linker. The N-acetyltransferase stretch occupies residues 250–454 (GVTIIDPLNT…EGWVERKKLK (205 aa)). Residues R331 and K349 each contribute to the UDP-N-acetyl-alpha-D-glucosamine site. H361 serves as the catalytic Proton acceptor. UDP-N-acetyl-alpha-D-glucosamine contacts are provided by Y364 and N375. Acetyl-CoA is bound by residues 384 to 385 (NY), A421, and R438.

In the N-terminal section; belongs to the N-acetylglucosamine-1-phosphate uridyltransferase family. The protein in the C-terminal section; belongs to the transferase hexapeptide repeat family. As to quaternary structure, homotrimer. Mg(2+) serves as cofactor.

Its subcellular location is the cytoplasm. It carries out the reaction alpha-D-glucosamine 1-phosphate + acetyl-CoA = N-acetyl-alpha-D-glucosamine 1-phosphate + CoA + H(+). The enzyme catalyses N-acetyl-alpha-D-glucosamine 1-phosphate + UTP + H(+) = UDP-N-acetyl-alpha-D-glucosamine + diphosphate. Its pathway is nucleotide-sugar biosynthesis; UDP-N-acetyl-alpha-D-glucosamine biosynthesis; N-acetyl-alpha-D-glucosamine 1-phosphate from alpha-D-glucosamine 6-phosphate (route II): step 2/2. It participates in nucleotide-sugar biosynthesis; UDP-N-acetyl-alpha-D-glucosamine biosynthesis; UDP-N-acetyl-alpha-D-glucosamine from N-acetyl-alpha-D-glucosamine 1-phosphate: step 1/1. It functions in the pathway bacterial outer membrane biogenesis; LPS lipid A biosynthesis. Catalyzes the last two sequential reactions in the de novo biosynthetic pathway for UDP-N-acetylglucosamine (UDP-GlcNAc). The C-terminal domain catalyzes the transfer of acetyl group from acetyl coenzyme A to glucosamine-1-phosphate (GlcN-1-P) to produce N-acetylglucosamine-1-phosphate (GlcNAc-1-P), which is converted into UDP-GlcNAc by the transfer of uridine 5-monophosphate (from uridine 5-triphosphate), a reaction catalyzed by the N-terminal domain. In Clostridium perfringens (strain SM101 / Type A), this protein is Bifunctional protein GlmU.